We begin with the raw amino-acid sequence, 296 residues long: Protoheme IX farnesyltransferase (296 aa).

A run of 9 helical transmembrane segments spans residues Ile-14–Ile-34, Tyr-36–Phe-56, Val-75–Ile-95, Leu-99–Ile-119, Val-133–Ala-153, Leu-163–Phe-183, Ile-209–Ala-229, Leu-234–Ala-254, and Phe-265–Val-285.

It belongs to the UbiA prenyltransferase family. Protoheme IX farnesyltransferase subfamily.

The protein localises to the cell inner membrane. The catalysed reaction is heme b + (2E,6E)-farnesyl diphosphate + H2O = Fe(II)-heme o + diphosphate. Its pathway is porphyrin-containing compound metabolism; heme O biosynthesis; heme O from protoheme: step 1/1. In terms of biological role, converts heme B (protoheme IX) to heme O by substitution of the vinyl group on carbon 2 of heme B porphyrin ring with a hydroxyethyl farnesyl side group. The protein is Protoheme IX farnesyltransferase of Yersinia enterocolitica serotype O:8 / biotype 1B (strain NCTC 13174 / 8081).